We begin with the raw amino-acid sequence, 506 residues long: Cytochrome P450 monooxygenase BOA3 (506 aa).

Residues 15–35 form a helical membrane-spanning segment; that stretch reads IYLWIGFVLVVLLAYPTYFAI. Cys451 serves as a coordination point for heme.

The protein belongs to the cytochrome P450 family. The cofactor is heme.

It localises to the membrane. The protein operates within polyketide biosynthesis. Functionally, cytochrome P450 monooxygenase; part of the gene cluster A that mediates the biosynthesis of botcinic acid and its botcinin derivatives, acetate-derived polyketides that contribute to virulence when combined with the sesquiterpene botrydial. Botcinic acid and its derivatives have been shown to induce chlorosis and necrosis during host plant infection, but also have antifungal activities. Two polyketide synthases, BOA6 and BOA9, are involved in the biosynthesis of botcinins. BOA6 mediates the formation of the per-methylated tetraketide core by condensation of four units of malonyl-CoA with one unit of acetyl-CoA, which would be methylated in activated methylene groups to yield a bicyclic acid intermediate that could then either be converted to botrylactone derivatives or lose the starter acetate unit through a retro-Claisen type C-C bond cleavage to yield botcinin derivatives. The second polyketide synthase, BOA9, is probably required for the biosynthesis of the tetraketide side chain of botcinins. The methyltransferase (MT) domain within BOA6 is probably responsible for the incorporation of four methyl groups. The trans-enoyl reductase BOA5 might take over the enoyl reductase function of BOA6 that misses an ER domain. The monooxygenases BOA2, BOA3 and BOA4 might be involved in further hydroxylations at C4, C5 and C8, whereas BOA7, close to BOA9, could potentially be involved in the hydroxylation at C4 in the side chain of botcinins. This Botryotinia fuckeliana (strain B05.10) (Noble rot fungus) protein is Cytochrome P450 monooxygenase BOA3.